The following is a 649-amino-acid chain: Echinoderm microtubule-associated protein-like 2 (649 aa).

Residues 10–649 (KEVIFSMEEG…DTSVLQWRVA (640 aa)) are tandem atypical propeller in EMLs. WD repeat units follow at residues 56-93 (KLDW…LYSV), 97-144 (RQRH…VWDS), 151-192 (HVLG…VWDW), 195-234 (ESKV…FWSL), 241-280 (KRQG…VWGK), 285-323 (ITQE…LWGS), 369-406 (FSLL…LWSS), 410-447 (QPVW…LLDT), 452-489 (LVAI…VYTV), 495-535 (KVSR…YWDA), 564-602 (FGIW…LFSY), and 609-648 (ALSH…QWRV).

It belongs to the WD repeat EMAP family. Interacts with GRID2 and may also interact with GRID1. Interacts with EML3. Binds unpolymerized tubulins via its WD repeat region. As to expression, widely expressed in both brain and peripheral tissues, including brainstem and enrichment in the postsynaptic density, PSD.

Its subcellular location is the cytoplasm. It localises to the cytoskeleton. The protein resides in the spindle. Tubulin binding protein that inhibits microtubule nucleation and growth, resulting in shorter microtubules. In Rattus norvegicus (Rat), this protein is Echinoderm microtubule-associated protein-like 2 (Eml2).